The sequence spans 403 residues: Phosphopentomutase (403 aa).

Mn(2+) contacts are provided by Asp13, Asp298, His303, Asp339, His340, and His351.

The protein belongs to the phosphopentomutase family. It depends on Mn(2+) as a cofactor.

Its subcellular location is the cytoplasm. It catalyses the reaction 2-deoxy-alpha-D-ribose 1-phosphate = 2-deoxy-D-ribose 5-phosphate. It carries out the reaction alpha-D-ribose 1-phosphate = D-ribose 5-phosphate. Its pathway is carbohydrate degradation; 2-deoxy-D-ribose 1-phosphate degradation; D-glyceraldehyde 3-phosphate and acetaldehyde from 2-deoxy-alpha-D-ribose 1-phosphate: step 1/2. Its function is as follows. Isomerase that catalyzes the conversion of deoxy-ribose 1-phosphate (dRib-1-P) and ribose 1-phosphate (Rib-1-P) to deoxy-ribose 5-phosphate (dRib-5-P) and ribose 5-phosphate (Rib-5-P), respectively. The chain is Phosphopentomutase from Streptococcus equi subsp. zooepidemicus (strain MGCS10565).